The chain runs to 537 residues: Leucine-rich repeat LGI family member 4 (537 aa).

Residues methionine 1 to alanine 19 form the signal peptide. 4 LRR repeats span residues threonine 53–lysine 74, serine 77–glycine 98, tyrosine 101–glycine 122, and serine 125–glycine 146. Residues asparagine 158–alanine 208 enclose the LRRCT domain. An N-linked (GlcNAc...) asparagine glycan is attached at asparagine 177. EAR repeat units lie at residues glutamate 210–tyrosine 252, arginine 256–serine 298, arginine 302–glycine 349, glycine 351–glycine 394, arginine 396–glycine 439, methionine 441–serine 483, and isoleucine 487–glutamate 532.

Can bind to ADAM11, ADAM22 and ADAM23. As to expression, brain. Expressed in the entire developing peripheral nerves. Strongly expressed in the trigeminal nerve and ganglion and particularly abundant in the boundary cap cells - a transient population of cells that contributes to the Schwann cell population of the dorsal root nerve.

It is found in the secreted. In terms of biological role, component of Schwann cell signaling pathway(s) that controls axon segregation and myelin formation. The sequence is that of Leucine-rich repeat LGI family member 4 (Lgi4) from Mus musculus (Mouse).